We begin with the raw amino-acid sequence, 334 residues long: Uroporphyrinogen decarboxylase (334 aa).

Residues 22–26 (RQVGR), Asp71, Tyr140, Ser195, and His310 each bind substrate.

It belongs to the uroporphyrinogen decarboxylase family. Homodimer.

It is found in the cytoplasm. The catalysed reaction is uroporphyrinogen III + 4 H(+) = coproporphyrinogen III + 4 CO2. It functions in the pathway porphyrin-containing compound metabolism; protoporphyrin-IX biosynthesis; coproporphyrinogen-III from 5-aminolevulinate: step 4/4. Catalyzes the decarboxylation of four acetate groups of uroporphyrinogen-III to yield coproporphyrinogen-III. The protein is Uroporphyrinogen decarboxylase of Chlamydia muridarum (strain MoPn / Nigg).